Here is a 292-residue protein sequence, read N- to C-terminus: Aspartate carbamoyltransferase catalytic subunit (292 aa).

Residues Arg-50 and Thr-51 each coordinate carbamoyl phosphate. Lys-78 serves as a coordination point for L-aspartate. Residues Arg-100, His-128, and Gln-131 each coordinate carbamoyl phosphate. Residues Arg-161 and Arg-211 each contribute to the L-aspartate site. Carbamoyl phosphate-binding residues include Gly-250 and Pro-251.

The protein belongs to the aspartate/ornithine carbamoyltransferase superfamily. ATCase family. Heterododecamer (2C3:3R2) of six catalytic PyrB chains organized as two trimers (C3), and six regulatory PyrI chains organized as three dimers (R2).

The catalysed reaction is carbamoyl phosphate + L-aspartate = N-carbamoyl-L-aspartate + phosphate + H(+). It participates in pyrimidine metabolism; UMP biosynthesis via de novo pathway; (S)-dihydroorotate from bicarbonate: step 2/3. In terms of biological role, catalyzes the condensation of carbamoyl phosphate and aspartate to form carbamoyl aspartate and inorganic phosphate, the committed step in the de novo pyrimidine nucleotide biosynthesis pathway. In Nitratiruptor sp. (strain SB155-2), this protein is Aspartate carbamoyltransferase catalytic subunit.